The sequence spans 146 residues: Inner membrane protein YdgK (146 aa).

Residues 1 to 12 (MTTTTPQRIGGW) lie on the Cytoplasmic side of the membrane. Residues 13 to 33 (LLGPLAWLLVALLSTTLALLL) form a helical membrane-spanning segment. Residues 34–59 (YTAALSSPQTFQTLGGQALTTQILWG) lie on the Periplasmic side of the membrane. Residues 60–80 (VSFITAIALWYYTLWLTIAFF) form a helical membrane-spanning segment. At 81-89 (KRRRCVPKH) the chain is on the cytoplasmic side. The helical transmembrane segment at 90–110 (YIIWLLISVLLAVKAFAFSPV) threads the bilayer. The Periplasmic portion of the chain corresponds to 111-112 (ED). Residues 113-133 (GIAVRQLLFTLLATALIVPYF) traverse the membrane as a helical segment. At 134 to 146 (KRSSRVKATFVNP) the chain is on the cytoplasmic side.

To Synechocystis PCC 6803 sll0481.

It localises to the cell inner membrane. The chain is Inner membrane protein YdgK (ydgK) from Escherichia coli (strain K12).